Reading from the N-terminus, the 91-residue chain is Elongation factor 1-beta (91 aa).

It belongs to the EF-1-beta/EF-1-delta family.

Promotes the exchange of GDP for GTP in EF-1-alpha/GDP, thus allowing the regeneration of EF-1-alpha/GTP that could then be used to form the ternary complex EF-1-alpha/GTP/AAtRNA. The polypeptide is Elongation factor 1-beta (Thermococcus gammatolerans (strain DSM 15229 / JCM 11827 / EJ3)).